Consider the following 667-residue polypeptide: Zeaxanthin epoxidase, chloroplastic (667 aa).

The N-terminal 59 residues, 1-59, are a transit peptide targeting the chloroplast; that stretch reads MGSTPFCYSINPSPSKLDFTRTHVFSPVSKQFYLDLSSFSGKPGGVSGFRSRRALLGVK. FAD contacts are provided by residues 82 to 110 and 360 to 373; these read RVLV…LVFE and GFTW…LLGD. The FHA domain occupies 558-612; it reads CIVGSEPDQDFPGMRIVIPSSQVSKMHARVIYKDGAFFLMDLRSEHGTYVTDNEG.

FAD is required as a cofactor. In terms of tissue distribution, expressed in leaves, stems and flowers, and at lower levels in roots and siliques.

It localises to the plastid. The protein resides in the chloroplast. The enzyme catalyses all-trans-zeaxanthin + 4 reduced [2Fe-2S]-[ferredoxin] + 2 O2 + 4 H(+) = all-trans-violaxanthin + 4 oxidized [2Fe-2S]-[ferredoxin] + 2 H2O. Its pathway is plant hormone biosynthesis; abscisate biosynthesis. In terms of biological role, zeaxanthin epoxidase that plays an important role in the xanthophyll cycle and abscisic acid (ABA) biosynthesis. Converts zeaxanthin into antheraxanthin and subsequently violaxanthin. Required for resistance to osmotic and drought stresses, ABA-dependent stomatal closure, seed development and dormancy, modulation of defense gene expression and disease resistance and non-photochemical quencing (NPQ). Through its role in ABA biosynthesis, regulates the expression of stress-responsive genes such as RD29A during osmotic stress and is required for normal plant growth during vegetative development. Is required for late skotomorphogenic growth through its role in the xanthophyll carotenoids neoxanthin, violaxanthin and antheraxanthin biosynthesis. Required for beta-aminobutyric acid (BABA)-induced priming in disease resistance, tolerance to salt and drought stresses and sterility. Participates in NPQ by regulating the level of zeaxanthin in photosynthetic energy conversion. NPQ is a process that maintains the balance between dissipation and utilization of light energy to minimize the generation of oxidizing molecules and the molecular damages they can generate. The sequence is that of Zeaxanthin epoxidase, chloroplastic (ZEP) from Arabidopsis thaliana (Mouse-ear cress).